Consider the following 90-residue polypeptide: Putative membrane protein insertion efficiency factor (90 aa).

Belongs to the UPF0161 family.

It is found in the cell membrane. Could be involved in insertion of integral membrane proteins into the membrane. This chain is Putative membrane protein insertion efficiency factor, found in Lactococcus lactis subsp. cremoris (strain SK11).